The sequence spans 223 residues: RNA-free ribonuclease P (223 aa).

This sequence belongs to the HARP family.

It carries out the reaction Endonucleolytic cleavage of RNA, removing 5'-extranucleotides from tRNA precursor.. Its function is as follows. RNA-free RNase P that catalyzes the removal of the 5'-leader sequence from pre-tRNA to produce the mature 5'-terminus. This is RNA-free ribonuclease P from Methanococcus maripaludis (strain C5 / ATCC BAA-1333).